The chain runs to 210 residues: Thymidylate kinase (210 aa).

10–17 lines the ATP pocket; sequence GGEGAGKS.

The protein belongs to the thymidylate kinase family.

It carries out the reaction dTMP + ATP = dTDP + ADP. Its function is as follows. Phosphorylation of dTMP to form dTDP in both de novo and salvage pathways of dTTP synthesis. This is Thymidylate kinase from Magnetococcus marinus (strain ATCC BAA-1437 / JCM 17883 / MC-1).